Here is a 200-residue protein sequence, read N- to C-terminus: 3-isopropylmalate dehydratase small subunit (200 aa).

It belongs to the LeuD family. LeuD type 1 subfamily. Heterodimer of LeuC and LeuD.

It carries out the reaction (2R,3S)-3-isopropylmalate = (2S)-2-isopropylmalate. It participates in amino-acid biosynthesis; L-leucine biosynthesis; L-leucine from 3-methyl-2-oxobutanoate: step 2/4. Its function is as follows. Catalyzes the isomerization between 2-isopropylmalate and 3-isopropylmalate, via the formation of 2-isopropylmaleate. This is 3-isopropylmalate dehydratase small subunit from Vibrio vulnificus (strain CMCP6).